A 553-amino-acid polypeptide reads, in one-letter code: Imidazole glycerol phosphate synthase hisHF (553 aa).

In terms of domain architecture, Glutamine amidotransferase type-1 spans 3–223 (TVHLLDYVAG…QLHSVTLEDS (221 aa)). Residues Cys-81, His-194, and Glu-196 each act as for GATase activity in the active site. The cyclase stretch occupies residues 232 to 553 (LTRRIIACLD…FLVRRFEPDV (322 aa)). Active-site residues include Asp-241 and Asp-403.

This sequence in the C-terminal section; belongs to the HisA/HisF family.

The enzyme catalyses 5-[(5-phospho-1-deoxy-D-ribulos-1-ylimino)methylamino]-1-(5-phospho-beta-D-ribosyl)imidazole-4-carboxamide + L-glutamine = D-erythro-1-(imidazol-4-yl)glycerol 3-phosphate + 5-amino-1-(5-phospho-beta-D-ribosyl)imidazole-4-carboxamide + L-glutamate + H(+). It catalyses the reaction L-glutamine + H2O = L-glutamate + NH4(+). It participates in amino-acid biosynthesis; L-histidine biosynthesis; L-histidine from 5-phospho-alpha-D-ribose 1-diphosphate: step 5/9. Its function is as follows. IGPS catalyzes the conversion of PRFAR and glutamine to IGP, AICAR and glutamate. The glutaminase domain produces the ammonia necessary for the cyclase domain to produce IGP and AICAR from PRFAR. The ammonia is channeled to the active site of the cyclase domain. This Emericella nidulans (strain FGSC A4 / ATCC 38163 / CBS 112.46 / NRRL 194 / M139) (Aspergillus nidulans) protein is Imidazole glycerol phosphate synthase hisHF (hisHF).